The following is a 378-amino-acid chain: Alginate lyase (378 aa).

Positions 1-28 (MQTPKLIRPTLLSMAILSSMAWATGASA) are cleaved as a signal peptide. Substrate-binding positions include 67–68 (SK), 140–141 (HT), and tyrosine 258.

Belongs to the polysaccharide lyase 5 family.

The protein resides in the periplasm. The enzyme catalyses Eliminative cleavage of alginate to give oligosaccharides with 4-deoxy-alpha-L-erythro-hex-4-enuronosyl groups at their non-reducing ends and beta-D-mannuronate at their reducing end.. Its activity is regulated as follows. The monovalent cation sodium enhances activity but is not absolutely required. Functionally, catalyzes the depolymerization of alginate by cleaving the beta-1,4 glycosidic bond between two adjacent sugar residues via a beta-elimination mechanism. Degrades deacetylated polymannuronate (polyM) alginate from P.aeruginosa more efficiently than non-deacetylated polyM and alginate from M.pyrifera. AlgL from P.syringae also degrades its own alginate, which may indicate a role in cleaving preformed alginate and/or in determining the length of the alginate polymer. May serve to degrade mislocalized alginate that is trapped in the periplasmic space. The sequence is that of Alginate lyase from Pseudomonas syringae pv. syringae.